The following is a 416-amino-acid chain: Tyrosine-protein phosphatase non-receptor type 2 (416 aa).

The Tyrosine-protein phosphatase domain maps to 5-275 (IEREFEELDA…RFSYMAIIEG (271 aa)). Phosphotyrosine is present on Tyr22. Residue Ser52 is modified to Phosphoserine. Tyr68 carries the phosphotyrosine modification. Substrate contacts are provided by residues Asp182, 216–222 (CSAGIGR), and Gln260. Cys216 functions as the Phosphocysteine intermediate in the catalytic mechanism. Cys216 is modified (S-nitrosocysteine). Residues Ser293, Ser298, Ser304, Ser320, and Ser339 each carry the phosphoserine modification. The interval 341-410 (ESILRKRIRE…WTLLFQLNVL (70 aa)) is endoplasmic reticulum location. Positions 371-410 (ERKRKRWLYWQPILTKMGFVSVILVGALVGWTLLFQLNVL) are may mediate interaction with STX17.

It belongs to the protein-tyrosine phosphatase family. Non-receptor class 1 subfamily. Interacts with RMDN3. Interacts with TMED9. Interacts with STX17; dephosphorylates STX17. Interacts with ITGA1 (via cytoplasmic domain); activates the phosphatase activity towards EGFR. Interacts with TRAF2; probably involved in tumor necrosis factor-mediated signaling. Interacts with MET. Interacts with FAM220A and STAT3; interaction with FAM220A promotes interaction of PTPN2 with transcriptional activator STAT3, leading to dephosphorylation of STAT3 by PTPN2 and negative regulation of STAT3 transcriptional activator activity. Post-translationally, specifically phosphorylated in a cell cycle-dependent manner by cyclin-dependent kinases CDK1 and CDK2. Probably activated through phosphorylation by PKR. Does not show tissue- or cell-type specificity although levels of transcription show variability. Macrophages showed higher levels of expression than lymphocytes.

The protein localises to the cytoplasm. Its subcellular location is the endoplasmic reticulum-Golgi intermediate compartment. The protein resides in the endoplasmic reticulum. It localises to the nucleus membrane. It is found in the nucleus. The protein localises to the cell membrane. The enzyme catalyses O-phospho-L-tyrosyl-[protein] + H2O = L-tyrosyl-[protein] + phosphate. Its function is as follows. Non-receptor type tyrosine-specific phosphatase that dephosphorylates receptor protein tyrosine kinases including INSR, EGFR, CSF1R, PDGFR. Also dephosphorylates non-receptor protein tyrosine kinases like JAK1, JAK2, JAK3, Src family kinases, STAT1, STAT3 and STAT6 either in the nucleus or the cytoplasm. Negatively regulates numerous signaling pathways and biological processes like hematopoiesis, inflammatory response, cell proliferation and differentiation, and glucose homeostasis. Plays a multifaceted and important role in the development of the immune system. Functions in T-cell receptor signaling through dephosphorylation of FYN and LCK to control T-cells differentiation and activation. Dephosphorylates CSF1R, negatively regulating its downstream signaling and macrophage differentiation. Negatively regulates cytokine (IL2/interleukin-2 and interferon)-mediated signaling through dephosphorylation of the cytoplasmic kinases JAK1, JAK3 and their substrate STAT1, that propagate signaling downstream of the cytokine receptors. Also regulates the IL6/interleukin-6 and IL4/interleukin-4 cytokine signaling through dephosphorylation of STAT3 and STAT6 respectively. In addition to the immune system, it is involved in anchorage-dependent, negative regulation of EGF-stimulated cell growth. Activated by the integrin ITGA1/ITGB1, it dephosphorylates EGFR and negatively regulates EGF signaling. Dephosphorylates PDGFRB and negatively regulates platelet-derived growth factor receptor-beta signaling pathway and therefore cell proliferation. Negatively regulates tumor necrosis factor-mediated signaling downstream via MAPK through SRC dephosphorylation. May also regulate the hepatocyte growth factor receptor signaling pathway through dephosphorylation of the hepatocyte growth factor receptor MET. Also plays an important role in glucose homeostasis. For instance, negatively regulates the insulin receptor signaling pathway through the dephosphorylation of INSR and control gluconeogenesis and liver glucose production through negative regulation of the IL6 signaling pathways. May also bind DNA. The chain is Tyrosine-protein phosphatase non-receptor type 2 (Ptpn2) from Rattus norvegicus (Rat).